Here is a 247-residue protein sequence, read N- to C-terminus: 3-deoxy-manno-octulosonate cytidylyltransferase (247 aa).

The protein belongs to the KdsB family.

It is found in the cytoplasm. The catalysed reaction is 3-deoxy-alpha-D-manno-oct-2-ulosonate + CTP = CMP-3-deoxy-beta-D-manno-octulosonate + diphosphate. It participates in nucleotide-sugar biosynthesis; CMP-3-deoxy-D-manno-octulosonate biosynthesis; CMP-3-deoxy-D-manno-octulosonate from 3-deoxy-D-manno-octulosonate and CTP: step 1/1. It functions in the pathway bacterial outer membrane biogenesis; lipopolysaccharide biosynthesis. In terms of biological role, activates KDO (a required 8-carbon sugar) for incorporation into bacterial lipopolysaccharide in Gram-negative bacteria. This is 3-deoxy-manno-octulosonate cytidylyltransferase from Rhodopseudomonas palustris (strain BisA53).